The sequence spans 488 residues: GTPase Der (488 aa).

EngA-type G domains follow at residues 3 to 166 and 199 to 372; these read PVVA…AEAM and IKLA…DSAT. Residues 9 to 16, 56 to 60, 118 to 121, 205 to 212, 252 to 256, and 317 to 320 contribute to the GTP site; these read GRPNVGKS, DTGGI, NKVD, GKPNVGKS, DTAGV, and NKWD. Residues 373 to 457 form the KH-like domain; sequence RRVSTSMLTR…PIQLRFQEGD (85 aa). The tract at residues 469 to 488 is disordered; sequence MSQERRRKRALSHIKDRKTK. A compositionally biased stretch (basic residues) spans 473–488; that stretch reads RRRKRALSHIKDRKTK.

Belongs to the TRAFAC class TrmE-Era-EngA-EngB-Septin-like GTPase superfamily. EngA (Der) GTPase family. Associates with the 50S ribosomal subunit.

Its function is as follows. GTPase that plays an essential role in the late steps of ribosome biogenesis. This Shewanella putrefaciens (strain CN-32 / ATCC BAA-453) protein is GTPase Der.